Consider the following 333-residue polypeptide: Chlorophyllide reductase 35.5 kDa chain (333 aa).

The span at 1–17 (MTDAPELKAFDQRLRDE) shows a compositional bias: basic and acidic residues. A disordered region spans residues 1–30 (MTDAPELKAFDQRLRDEAAEEPTLEVPQGE). Residues 45–50 (GIGKSF) and Lys-74 each bind ATP. Ser-49 is a Mg(2+) binding site. [4Fe-4S] cluster contacts are provided by Cys-130 and Cys-165. 219–220 (NK) contributes to the ATP binding site.

It belongs to the NifH/BchL/ChlL family. Homodimer. Chlorophyllide reductase is composed of three subunits; BchX, BchY and BchZ. [4Fe-4S] cluster is required as a cofactor.

It catalyses the reaction 3-deacetyl-3-vinylbacteriochlorophyllide a + 2 oxidized [2Fe-2S]-[ferredoxin] + ADP + phosphate = chlorophyllide a + 2 reduced [2Fe-2S]-[ferredoxin] + ATP + H2O + H(+). It carries out the reaction bacteriochlorophyllide a + 2 oxidized [2Fe-2S]-[ferredoxin] + ADP + phosphate = 3-acetyl-3-devinylchlorophyllide a + 2 reduced [2Fe-2S]-[ferredoxin] + ATP + H2O + H(+). The catalysed reaction is 3-deacetyl-3-(1-hydroxyethyl)bacteriochlorophyllide a + 2 oxidized [2Fe-2S]-[ferredoxin] + ADP + phosphate = 3-devinyl-3-(1-hydroxyethyl)chlorophyllide a + 2 reduced [2Fe-2S]-[ferredoxin] + ATP + H2O + H(+). Its pathway is porphyrin-containing compound metabolism; bacteriochlorophyll biosynthesis. In terms of biological role, converts chlorophylls (Chl) into bacteriochlorophylls (BChl) by reducing ring B of the tetrapyrrole. The chain is Chlorophyllide reductase 35.5 kDa chain (bchX) from Cereibacter sphaeroides (strain ATCC 17023 / DSM 158 / JCM 6121 / CCUG 31486 / LMG 2827 / NBRC 12203 / NCIMB 8253 / ATH 2.4.1.) (Rhodobacter sphaeroides).